Here is an 84-residue protein sequence, read N- to C-terminus: Small ribosomal subunit protein bS20 (84 aa).

The interval 1–28 (MPNIKSAIKRVKTAETRNSRNASQRSAM) is disordered.

This sequence belongs to the bacterial ribosomal protein bS20 family.

Its function is as follows. Binds directly to 16S ribosomal RNA. This is Small ribosomal subunit protein bS20 from Listeria monocytogenes serotype 4b (strain CLIP80459).